The following is a 717-amino-acid chain: ATP-dependent zinc metalloprotease FtsH (717 aa).

The Cytoplasmic segment spans residues 1 to 9 (MKNASRIFK). The chain crosses the membrane as a helical span at residues 10–30 (GPLIWILLCIGLIIVFLQFAG). Topologically, residues 31-111 (SGNGYKDIPT…SWQGENPGQS (81 aa)) are extracellular. A helical transmembrane segment spans residues 112-132 (IWKALLINFLPFVIILLFFLW). Topologically, residues 133 to 717 (AMNAAQGMGG…NGNPWGPPRS (585 aa)) are cytoplasmic. 207–214 (GPPGTGKT) contacts ATP. H429 serves as a coordination point for Zn(2+). E430 is a catalytic residue. 2 residues coordinate Zn(2+): H433 and D505. The interval 617–717 (AFTGSDKRVP…NGNPWGPPRS (101 aa)) is disordered. Positions 691-717 (PEPPSPTHPGEGPQPPSNGNPWGPPRS) are enriched in pro residues.

The protein in the central section; belongs to the AAA ATPase family. This sequence in the C-terminal section; belongs to the peptidase M41 family. As to quaternary structure, homohexamer. Requires Zn(2+) as cofactor.

It localises to the cell membrane. Acts as a processive, ATP-dependent zinc metallopeptidase for both cytoplasmic and membrane proteins. Plays a role in the quality control of integral membrane proteins. The chain is ATP-dependent zinc metalloprotease FtsH from Cutibacterium acnes (strain SK137) (Propionibacterium acnes).